The following is a 272-amino-acid chain: 27-O-demethylrifamycin SV methyltransferase (272 aa).

S-adenosyl-L-methionine-binding positions include Ser-89, Gln-94, 117 to 118, Leu-134, and His-139; that span reads DA.

The protein belongs to the class I-like SAM-binding methyltransferase superfamily. In terms of assembly, exists probably as a trimer.

It carries out the reaction 27-O-demethylrifamycin SV + S-adenosyl-L-methionine = rifamycin SV + S-adenosyl-L-homocysteine + H(+). Its pathway is antibiotic biosynthesis; rifamycin B biosynthesis. Slightly inhibited by Ca(2+) and Mg(2+). Strongly inhibited by Zn(2+), Ni(2+) and Co(2+). Catalyzes the methylation of 27-O-demethylrifamycin SV (DMRSV) to rifamycin SV. The protein is 27-O-demethylrifamycin SV methyltransferase of Amycolatopsis mediterranei (strain S699) (Nocardia mediterranei).